A 418-amino-acid chain; its full sequence is Probable cysteine desulfurase 2 (418 aa).

N6-(pyridoxal phosphate)lysine is present on Lys-234. Cys-374 (cysteine persulfide intermediate) is an active-site residue.

It belongs to the class-V pyridoxal-phosphate-dependent aminotransferase family. Csd subfamily. The cofactor is pyridoxal 5'-phosphate.

The enzyme catalyses (sulfur carrier)-H + L-cysteine = (sulfur carrier)-SH + L-alanine. Its function is as follows. Catalyzes the removal of elemental sulfur and selenium atoms from L-cysteine, L-cystine, L-selenocysteine, and L-selenocystine to produce L-alanine. The protein is Probable cysteine desulfurase 2 (csd2) of Mycobacterium leprae (strain TN).